The primary structure comprises 700 residues: Pentatricopeptide repeat-containing protein At3g26540 (700 aa).

PPR repeat units follow at residues Pro95 to Arg125, Asp126 to Ala160, Thr161 to Gly195, Asn196 to Pro226, Ser227 to Pro261, Leu262 to Ala296, Asp297 to Lys327, Asp328 to Ser362, Trp363 to Glu389, Asp394 to Thr428, Asn429 to Leu459, Asp461 to Ser495, Tyr497 to Ile529, Asp530 to Arg560, Asp561 to Pro595, Asp596 to Lys626, and Gln632 to Asp662.

Belongs to the PPR family. PCMP-A subfamily.

This is Pentatricopeptide repeat-containing protein At3g26540 (PCMP-A5) from Arabidopsis thaliana (Mouse-ear cress).